The chain runs to 697 residues: Elongation factor G 2 (697 aa).

Residues 6–281 enclose the tr-type G domain; that stretch reads TNYRNFGIFA…AVVDFLPNPT (276 aa). GTP-binding positions include 15 to 22, 79 to 83, and 133 to 136; these read AHVDAGKT, DTPGH, and NKLD.

Belongs to the TRAFAC class translation factor GTPase superfamily. Classic translation factor GTPase family. EF-G/EF-2 subfamily.

The protein resides in the cytoplasm. Catalyzes the GTP-dependent ribosomal translocation step during translation elongation. During this step, the ribosome changes from the pre-translocational (PRE) to the post-translocational (POST) state as the newly formed A-site-bound peptidyl-tRNA and P-site-bound deacylated tRNA move to the P and E sites, respectively. Catalyzes the coordinated movement of the two tRNA molecules, the mRNA and conformational changes in the ribosome. The chain is Elongation factor G 2 from Trichodesmium erythraeum (strain IMS101).